The primary structure comprises 73 residues: Plasticin-A1 (73 aa).

An N-terminal signal peptide occupies residues 1–22 (MAFLKKSLFLVLFLAIVPLSIC). The propeptide occupies 23–42 (EEEKREEENEEKQEDDDQSE). The segment at 25-45 (EKREEENEEKQEDDDQSEKRG) is disordered. Residues 30–40 (ENEEKQEDDDQ) show a composition bias toward acidic residues. Residue Gly70 is modified to Glycine amide. The propeptide occupies 72 to 73 (ES).

Belongs to the frog skin active peptide (FSAP) family. Plasticin subfamily. Expressed by the skin glands.

The protein resides in the secreted. It localises to the target cell membrane. In terms of biological role, peptide with no antimicrobial activity. May act in synergy with cationic peptides by enhancing their activity. Has a moderate hemolytic activity. The sequence is that of Plasticin-A1 from Agalychnis annae (Blue-sided leaf frog).